The following is a 391-amino-acid chain: Probable chaperonin-like protein PrmG (391 aa).

Positions 153–191 are disordered; it reads TTRWSVRSSPPPSNTSARTASSPPRRATHSGCRSRSSTA. Residues 154–174 show a composition bias toward polar residues; that stretch reads TRWSVRSSPPPSNTSARTASS.

Belongs to the chaperonin (HSP60) family.

In terms of biological role, probably plays an essential role in the productive folding of PrmA and PrmC, and thus in the formation of the active PrmABCD complex. This is Probable chaperonin-like protein PrmG from Gordonia sp. (strain TY-5).